The sequence spans 90 residues: Putative membrane protein insertion efficiency factor (90 aa).

The protein belongs to the UPF0161 family.

The protein localises to the cell inner membrane. In terms of biological role, could be involved in insertion of integral membrane proteins into the membrane. This is Putative membrane protein insertion efficiency factor from Thermosynechococcus vestitus (strain NIES-2133 / IAM M-273 / BP-1).